The chain runs to 500 residues: Probable cytosol aminopeptidase (500 aa).

Mn(2+)-binding residues include Lys264 and Asp269. Residue Lys276 is part of the active site. Mn(2+) is bound by residues Asp287, Asp346, and Glu348. The active site involves Arg350.

It belongs to the peptidase M17 family. Mn(2+) serves as cofactor.

The protein resides in the cytoplasm. It catalyses the reaction Release of an N-terminal amino acid, Xaa-|-Yaa-, in which Xaa is preferably Leu, but may be other amino acids including Pro although not Arg or Lys, and Yaa may be Pro. Amino acid amides and methyl esters are also readily hydrolyzed, but rates on arylamides are exceedingly low.. The enzyme catalyses Release of an N-terminal amino acid, preferentially leucine, but not glutamic or aspartic acids.. Presumably involved in the processing and regular turnover of intracellular proteins. Catalyzes the removal of unsubstituted N-terminal amino acids from various peptides. This is Probable cytosol aminopeptidase from Rhodopseudomonas palustris (strain ATCC BAA-98 / CGA009).